The chain runs to 101 residues: Small ribosomal subunit protein uS14 (101 aa).

It belongs to the universal ribosomal protein uS14 family. As to quaternary structure, part of the 30S ribosomal subunit. Contacts proteins S3 and S10.

Its function is as follows. Binds 16S rRNA, required for the assembly of 30S particles and may also be responsible for determining the conformation of the 16S rRNA at the A site. The sequence is that of Small ribosomal subunit protein uS14 from Idiomarina loihiensis (strain ATCC BAA-735 / DSM 15497 / L2-TR).